Consider the following 579-residue polypeptide: Nuclear receptor coactivator 5 (579 aa).

M1 is subject to N-acetylmethionine. The segment at 1–78 (MNTAPSRPSP…LRDHRDSRSV (78 aa)) is disordered. The interval 1-158 (MNTAPSRPSP…RDSFDGRGPP (158 aa)) is transcription repression. At T3 the chain carries Phosphothreonine. A phosphoserine mark is found at S9, S21, S24, S29, and S34. Composition is skewed to basic and acidic residues over residues 11-62 (TRRD…DLRD) and 68-78 (DLRDHRDSRSV). Phosphoserine is present on residues S96, S116, S126, S143, and S151. Positions 148–173 (YRDSFDGRGPPGPESQSRAKERLKRE) are disordered. The span at 164–173 (SRAKERLKRE) shows a compositional bias: basic and acidic residues. Phosphothreonine is present on T274. Positions 345-349 (LINLL) match the LXXLL motif motif. 3 disordered regions span residues 375–428 (MRSS…PTSQ), 444–537 (VTAN…NFDN), and 560–579 (QTTA…QRHY). Position 378 is a phosphoserine (S378). T379 bears the Phosphothreonine mark. A Phosphoserine modification is found at S381. The segment covering 395–413 (SGASLKTQPSSQPLQSGQV) has biased composition (polar residues). The segment covering 446–457 (ANSSSASPSVAA) has biased composition (low complexity). The interval 458–579 (GNTPNQNFST…APMGSYQRHY (122 aa)) is transcription activation. 2 stretches are compositionally biased toward polar residues: residues 459–485 (NTPN…NQPP) and 520–537 (SNMT…NFDN).

Binds HTATIP2/TIP30. Interacts with YLPM1. Forms a complex with ILF2, ILF3, YLPM1, KHDRBS1, RBMX and PPP1CA. In terms of tissue distribution, widely expressed.

It is found in the nucleus. Nuclear receptor coregulator that can have both coactivator and corepressor functions. Interacts with nuclear receptors for steroids (ESR1 and ESR2) independently of the steroid binding domain (AF-2) of the ESR receptors, and with the orphan nuclear receptor NR1D2. Involved in the coactivation of nuclear steroid receptors (ER) as well as the corepression of MYC in response to 17-beta-estradiol (E2). The protein is Nuclear receptor coactivator 5 (NCOA5) of Homo sapiens (Human).